We begin with the raw amino-acid sequence, 528 residues long: MNSYKEEILQTKSDFTLKNLIFFAISTLCYKRALFNENCYKKVNFEIEHFKGADFDCQLKPTVVSLQAGVDKEADSFLEMMKTYIFSLVSMKVPFTVYLIISSQCKSILEDDAVEKEIFSFTINPGSEEKICCESFVSYQRSERFVIKLFLSGNVKTECKDEEKVVQIITKMERFQLSKGEATKAGVFLNTVETKDCMSWLNRGEFKDIVSFYESNNGIAISHCSHAFVPISTEKIMINKESSLFDSQEKIDSQLEKFLQPLKYDEIGSTQILDEQSVEKSLSQGKCEKMQNESRGLREIKNNNPCEEVKKSNWLKKNISGSDKVDKAEKKKALLNCECGDSTEDSEMFQCERCDGWVHCACYGFESDSDPRQPNQLLCYTCLLVDSESSLYDRMTMLVAYRRAIRCIWASEYQGFQKLAARLNCSYADAKRIEERLVNENIIYKEKKRKWIYFTNKSPEMVSYLREKYFTPSRWISHLNFQNYRQENQRVNMRSFLRPERMEVIERPKKVSKTSNTKETDTMKPLRI.

Positions 11 to 212 (TKSDFTLKNL…RGEFKDIVSF (202 aa)) constitute an HORMA domain. The PHD-type zinc-finger motif lies at 334-385 (LLNCECGDSTEDSEMFQCERCDGWVHCACYGFESDSDPRQPNQLLCYTCLLV). Cysteine 337, cysteine 339, cysteine 351, cysteine 354, histidine 359, cysteine 362, cysteine 379, and cysteine 382 together coordinate Zn(2+). Positions 507-528 (RPKKVSKTSNTKETDTMKPLRI) are disordered. Over residues 516–528 (NTKETDTMKPLRI) the composition is skewed to basic and acidic residues.

In terms of assembly, interacts (via N-terminus) with rec10; the interaction is direct. Interacts (via C-terminus) with rec15 (via C-terminus); the interaction is direct.

It localises to the nucleus. Its subcellular location is the chromosome. Facilitates initiation of meiotic recombination and DNA double-strand break (DSB) formation at DSB hotspot sites by enhancing the interaction between rec10 and rec15. The protein is Linear element-associated protein hop1 of Schizosaccharomyces pombe (strain 972 / ATCC 24843) (Fission yeast).